The primary structure comprises 185 residues: Ribosome maturation factor RimM (185 aa).

The PRC barrel domain maps to 108–183; sequence PGEFHVTDLL…RLEIKTIPGL (76 aa).

Belongs to the RimM family. As to quaternary structure, binds ribosomal protein uS19.

The protein localises to the cytoplasm. An accessory protein needed during the final step in the assembly of 30S ribosomal subunit, possibly for assembly of the head region. Essential for efficient processing of 16S rRNA. May be needed both before and after RbfA during the maturation of 16S rRNA. It has affinity for free ribosomal 30S subunits but not for 70S ribosomes. In Synechocystis sp. (strain ATCC 27184 / PCC 6803 / Kazusa), this protein is Ribosome maturation factor RimM.